The sequence spans 211 residues: Protein-methionine-sulfoxide reductase heme-binding subunit MsrQ (211 aa).

Transmembrane regions (helical) follow at residues 8–28 (VIWL…WLVW), 54–74 (FLLA…PLLI), 82–102 (LWCF…ELGV), 116–136 (PYLT…FTST), and 153–173 (FVYL…KIIS).

The protein belongs to the MsrQ family. As to quaternary structure, heterodimer of a catalytic subunit (MsrP) and a heme-binding subunit (MsrQ). Requires FMN as cofactor. Heme b is required as a cofactor.

The protein localises to the cell inner membrane. In terms of biological role, part of the MsrPQ system that repairs oxidized periplasmic proteins containing methionine sulfoxide residues (Met-O), using respiratory chain electrons. Thus protects these proteins from oxidative-stress damage caused by reactive species of oxygen and chlorine generated by the host defense mechanisms. MsrPQ is essential for the maintenance of envelope integrity under bleach stress, rescuing a wide series of structurally unrelated periplasmic proteins from methionine oxidation, including the primary periplasmic chaperone SurA and the lipoprotein Pal. MsrQ provides electrons for reduction to the reductase catalytic subunit MsrP, using the quinone pool of the respiratory chain. In Escherichia coli O6:K15:H31 (strain 536 / UPEC), this protein is Protein-methionine-sulfoxide reductase heme-binding subunit MsrQ.